Consider the following 426-residue polypeptide: Serine--tRNA ligase (426 aa).

229–231 (TAE) is an L-serine binding site. ATP is bound by residues 260 to 262 (RTE) and valine 276. Glutamate 283 serves as a coordination point for L-serine. 350-353 (EVTS) serves as a coordination point for ATP. Residue threonine 386 coordinates L-serine.

Belongs to the class-II aminoacyl-tRNA synthetase family. Type-1 seryl-tRNA synthetase subfamily. Homodimer. The tRNA molecule binds across the dimer.

The protein resides in the cytoplasm. The catalysed reaction is tRNA(Ser) + L-serine + ATP = L-seryl-tRNA(Ser) + AMP + diphosphate + H(+). It catalyses the reaction tRNA(Sec) + L-serine + ATP = L-seryl-tRNA(Sec) + AMP + diphosphate + H(+). Its pathway is aminoacyl-tRNA biosynthesis; selenocysteinyl-tRNA(Sec) biosynthesis; L-seryl-tRNA(Sec) from L-serine and tRNA(Sec): step 1/1. In terms of biological role, catalyzes the attachment of serine to tRNA(Ser). Is also able to aminoacylate tRNA(Sec) with serine, to form the misacylated tRNA L-seryl-tRNA(Sec), which will be further converted into selenocysteinyl-tRNA(Sec). This chain is Serine--tRNA ligase, found in Rhodopirellula baltica (strain DSM 10527 / NCIMB 13988 / SH1).